We begin with the raw amino-acid sequence, 369 residues long: Histidinol-phosphate aminotransferase 3 (369 aa).

K220 is subject to N6-(pyridoxal phosphate)lysine.

It belongs to the class-II pyridoxal-phosphate-dependent aminotransferase family. Histidinol-phosphate aminotransferase subfamily. In terms of assembly, homodimer. Pyridoxal 5'-phosphate is required as a cofactor.

It carries out the reaction L-histidinol phosphate + 2-oxoglutarate = 3-(imidazol-4-yl)-2-oxopropyl phosphate + L-glutamate. It participates in amino-acid biosynthesis; L-histidine biosynthesis; L-histidine from 5-phospho-alpha-D-ribose 1-diphosphate: step 7/9. This Mesorhizobium japonicum (strain LMG 29417 / CECT 9101 / MAFF 303099) (Mesorhizobium loti (strain MAFF 303099)) protein is Histidinol-phosphate aminotransferase 3 (hisC3).